Consider the following 580-residue polypeptide: Acyl--CoA ligase GME11374 (580 aa).

This sequence belongs to the ATP-dependent AMP-binding enzyme family.

It functions in the pathway secondary metabolite biosynthesis. Its function is as follows. Acyl--CoA ligase; part of the gene cluster that mediates the biosynthesis of dibenzodioxocinones such as pestalotiollide B, a novel class of inhibitors against cholesterol ester transfer protein (CEPT). The biosynthesis initiates from condensation of acetate and malonate units catalyzed by the non-reducing PKS pks8/GME11356. Pks8/GME11356 lacks a thioesterase (TE) domain, which is important to the cyclizing of the third ring of atrochrysone carboxylic acid, and the esterase GME11355 might play the role of TE and catalyzes the cyclization reaction of the C ring. The lactamase-like protein GME11357 (or other beta-lactamases in Pestalotiopsis microspora) probably hydrolyzes the thioester bond between the ACP of pks8/GME11356 and the intermediate to release atrochrysone carboxylic acid, which is spontaneously dehydrates to form endocrocin anthrone. Endocrocin anthrone is further converted to emodin via the endocrocin intermediate. Emodin is then oxidized by several enzymes such as the Baeyer-Villiger oxidase GME11358, the oxidoreductase GME11367, the short chain dehydrogenase/reductase GME11373, as well as by other oxidoreductases from the cluster, to modify the A and C rings and open the B ring, and finally yield monodictyphenone. The prenyltransferase GME11375 may catalyze the addition reaction between the C5 side chains and the carbon bone of dibenzodioxocinones. The remaining biochemical reactions to the final product dibenzodioxocinones should be methylation catalyzed by methyltransferase GME11366 and reduction and lactonization reaction catalyzed by a series of oxidordeuctases. The sequence is that of Acyl--CoA ligase GME11374 from Pestalotiopsis microspora.